Reading from the N-terminus, the 269-residue chain is 15-hydroxyprostaglandin dehydrogenase [NAD(+)] (269 aa).

Residues 12-20 (GAAQGIGKA), 36-37 (DW), 63-65 (CDV), and Asn-91 contribute to the NAD(+) site. Positions 138 and 148 each coordinate substrate. Residue Tyr-151 is the Proton acceptor of the active site. NAD(+)-binding positions include 151-155 (YCASK) and 186-188 (VDT).

This sequence belongs to the short-chain dehydrogenases/reductases (SDR) family. As to quaternary structure, homodimer. In terms of tissue distribution, expressed in proximal convoluted tubules of the kidney, where it colocalizes with the prostaglandin transporter SLC22A22 (at protein level). Expressed in lung, intestine, stomach and liver.

It localises to the cytoplasm. The enzyme catalyses prostaglandin E2 + NAD(+) = 15-oxoprostaglandin E2 + NADH + H(+). It catalyses the reaction (15S)-hydroxy-(5Z,8Z,11Z,13E)-eicosatetraenoate + NAD(+) = 15-oxo-(5Z,8Z,11Z,13E)-eicosatetraenoate + NADH + H(+). The catalysed reaction is (11R)-hydroxy-(5Z,8Z,12E,14Z)-eicosatetraenoate + NAD(+) = 11-oxo-(5Z,8Z,12E,14Z)-eicosatetraenoate + NADH + H(+). It carries out the reaction lipoxin A4 + NAD(+) = 15-oxo-(5S,6R)-dihydroxy-(7E,9E,11Z,13E)-eicosatetraenoate + NADH + H(+). The enzyme catalyses 15-oxo-(5S,6R)-dihydroxy-(7E,9E,11Z)-eicosatrienoate + NADH + H(+) = (5S,6R,15S)-trihydroxy-(7E,9E,11Z)-eicosatrienoate + NAD(+). It catalyses the reaction prostaglandin A1 + NAD(+) = 15-oxo-prostaglandin A1 + NADH + H(+). The catalysed reaction is prostaglandin E1 + NAD(+) = 15-oxoprostaglandin E1 + NADH + H(+). It carries out the reaction 14-hydroxy-(4Z,7Z,10Z,12E,16Z,19Z)-docosahexaenoate + NAD(+) = 14-oxo-(4Z,7Z,10Z,12E,16Z,19Z)-docosahexaenoate + NADH + H(+). The enzyme catalyses resolvin E1 + NAD(+) = 18-oxo-resolvin E1 + NADH + H(+). It catalyses the reaction resolvin D1 + NAD(+) = 8-oxoresolvin D1 + NADH + H(+). The catalysed reaction is resolvin D1 + NAD(+) = 17-oxoresolvin D1 + NADH + H(+). It carries out the reaction resolvin D2 + NAD(+) = 7-oxoresolvin D2 + NADH + H(+). The enzyme catalyses resolvin D2 + NAD(+) = 16-oxoresolvin D2 + NADH + H(+). Its function is as follows. Catalyzes the NAD-dependent dehydrogenation (oxidation) of a broad array of hydroxylated polyunsaturated fatty acids (mainly eicosanoids and docosanoids, including prostaglandins, lipoxins and resolvins), yielding their corresponding keto (oxo) metabolites. Decreases the levels of the pro-proliferative prostaglandins such as prostaglandin E2 (whose activity is increased in cancer because of an increase in the expression of cyclooxygenase 2) and generates oxo-fatty acid products that can profoundly influence cell function by abrogating pro-inflammatory cytokine expression. Converts resolvins E1, D1 and D2 to their oxo products, which represents a mode of resolvin inactivation. Resolvin E1 plays important roles during the resolution phase of acute inflammation, while resolvins D1 and D2 have a unique role in obesity-induced adipose inflammation. The sequence is that of 15-hydroxyprostaglandin dehydrogenase [NAD(+)] (Hpgd) from Mus musculus (Mouse).